Reading from the N-terminus, the 287-residue chain is Glutamate racemase (287 aa).

Substrate contacts are provided by residues 32–33 and 64–65; these read DS and YG. The Proton donor/acceptor role is filled by Cys-96. 97 to 98 contacts substrate; it reads NT. Cys-208 (proton donor/acceptor) is an active-site residue. 209 to 210 lines the substrate pocket; it reads TH.

The protein belongs to the aspartate/glutamate racemases family.

The catalysed reaction is L-glutamate = D-glutamate. The protein operates within cell wall biogenesis; peptidoglycan biosynthesis. In terms of biological role, provides the (R)-glutamate required for cell wall biosynthesis. This is Glutamate racemase from Photorhabdus laumondii subsp. laumondii (strain DSM 15139 / CIP 105565 / TT01) (Photorhabdus luminescens subsp. laumondii).